Reading from the N-terminus, the 2280-residue chain is Protein Ycf2 (2280 aa).

Residue 1631–1638 (GSIGTGRS) coordinates ATP.

Belongs to the Ycf2 family.

It is found in the plastid. Its subcellular location is the chloroplast stroma. In terms of biological role, probable ATPase of unknown function. Its presence in a non-photosynthetic plant (Epifagus virginiana) and experiments in tobacco indicate that it has an essential function which is probably not related to photosynthesis. The chain is Protein Ycf2 from Nicotiana tomentosiformis (Tobacco).